The primary structure comprises 1669 residues: Polycomb group protein Asx (1669 aa).

A disordered region spans residues 90–109 (IPPEKKPMAPSEEAAVSTAP). A DEUBAD domain is found at 215-338 (PDSILASTNL…FEPFWGEKNS (124 aa)). Short sequence motifs (LXXLL motif) lie at residues 224-228 (LRALL) and 244-248 (LIQLL). The NEF motif motif lies at 283–285 (NEF). Basic and acidic residues predominate over residues 336–352 (KNSRGKDKDKLESDCKN). Disordered stretches follow at residues 336 to 378 (KNSR…QQAT), 410 to 478 (SSTF…IVPN), 635 to 718 (FFTS…SAGA), 952 to 972 (MPHQASQQPQQNAQSNAQQQR), 1174 to 1193 (QQQSPPVPAPQQQTVQQQQL), 1398 to 1437 (PGPGGATATAQQLQMLQQHHQSTTSPVPVQNPQQPAPEQL), 1482 to 1505 (LHSINGIPMGGRGRPASVDTTAGS), and 1587 to 1610 (SPTAAPSPINQQPQSQPTGTQHQH). Composition is skewed to polar residues over residues 367–378 (ATSQQKPLQQAT), 413–425 (FPPTGSQNNVLNE), and 434–450 (PSSSPSQRKQAPTTIAT). The span at 465–474 (KDSKQPKMDE) shows a compositional bias: basic and acidic residues. A compositionally biased stretch (low complexity) spans 635 to 650 (FFTSSSSSNTATTAAN). Residues 651–661 (KLEEHSDKPED) show a composition bias toward basic and acidic residues. Positions 666-718 (IASSISGSTPASSITSTSCTSSSSSSASMSSSCSSSNSGSTTTAPTTSSSAGA) are enriched in low complexity. 2 stretches are compositionally biased toward low complexity: residues 1174–1192 (QQQSPPVPAPQQQTVQQQQ) and 1404–1436 (TATAQQLQMLQQHHQSTTSPVPVQNPQQPAPEQ). The span at 1592–1610 (PSPINQQPQSQPTGTQHQH) shows a compositional bias: low complexity. The segment at 1602–1666 (QPTGTQHQHP…IGAAKLCVAC (65 aa)) adopts a PHD-type; atypical zinc-finger fold.

The protein belongs to the Asx family. In terms of assembly, component of the polycomb repressive deubiquitinase (PR-DUB) complex, at least composed of caly/calypso, Asx and sba (MBD5/6 homolog). Interacts (via DEUBAD domain) with caly/calypso (via ULD domain); the interaction produces a stable heterodimer with a composite binding site for ubiquitin. Two copies of the caly-Asx heterodimer assemble into a bidentate tetramer. Interacts (via PHD domain) with sba (probably via MBD domain); the interaction is important for the stability of the PR-DUB complex. Interacts with tant. Interacts with cyclin CycG. In terms of tissue distribution, highly expressed in nurse cells and deposited in oocytes late in oogenesis. Ubiquitous in early embryos. Late embryos show higher levels in CNS and neurectoderm.

Its subcellular location is the nucleus. The protein resides in the chromosome. Functionally, non-catalytic component of the polycomb repressive deubiquitinase (PR-DUB) complex, a complex that specifically mediates deubiquitination of histone H2A monoubiquitinated at 'Lys-119' (H2AK118ub1). Activator of the PR-DUB complex involved in ubiquitin binding and allosteric activation of calypso deubiquitinase activity. PR-DUB does not deubiquitinate monoubiquitinated histone H2B. PR-DUB is required to maintain the transcriptionally repressive state of homeotic genes throughout development. The PR-DUB complex has weak or no activity toward 'Lys-48'- and 'Lys-63'-linked polyubiquitin chains. Atypical Polycomb group protein, which may be involved in both Polycomb group (PcG) and trithorax group (trxG) complexes. PcG and trxG proteins act by forming multiprotein complexes, which are respectively required to maintain the transcriptionally repressive and transcriptionally active state of homeotic genes throughout development. PcG and trxG protein complexes are not required to initiate repression and activation, but to maintain it during later stages of development. The polypeptide is Polycomb group protein Asx (Drosophila melanogaster (Fruit fly)).